We begin with the raw amino-acid sequence, 361 residues long: Alanine racemase (361 aa).

The active-site Proton acceptor; specific for D-alanine is K34. K34 bears the N6-(pyridoxal phosphate)lysine mark. R129 serves as a coordination point for substrate. The active-site Proton acceptor; specific for L-alanine is Y256. M304 serves as a coordination point for substrate.

It belongs to the alanine racemase family. In terms of assembly, homodimer. Pyridoxal 5'-phosphate is required as a cofactor.

The enzyme catalyses L-alanine = D-alanine. Its pathway is amino-acid biosynthesis; D-alanine biosynthesis; D-alanine from L-alanine: step 1/1. Catalyzes the interconversion of L-alanine and D-alanine. May also act on other amino acids. This is Alanine racemase (alr) from Corynebacterium glutamicum (strain ATCC 13032 / DSM 20300 / JCM 1318 / BCRC 11384 / CCUG 27702 / LMG 3730 / NBRC 12168 / NCIMB 10025 / NRRL B-2784 / 534).